The sequence spans 243 residues: Glucosamine-6-phosphate deaminase (243 aa).

Catalysis depends on Asp-67, which acts as the Proton acceptor; for enolization step. Asn-137 functions as the For ring-opening step in the catalytic mechanism. His-139 (proton acceptor; for ring-opening step) is an active-site residue. The active-site For ring-opening step is the Glu-144.

Belongs to the glucosamine/galactosamine-6-phosphate isomerase family. NagB subfamily.

The catalysed reaction is alpha-D-glucosamine 6-phosphate + H2O = beta-D-fructose 6-phosphate + NH4(+). The protein operates within amino-sugar metabolism; N-acetylneuraminate degradation; D-fructose 6-phosphate from N-acetylneuraminate: step 5/5. In terms of biological role, catalyzes the reversible isomerization-deamination of glucosamine 6-phosphate (GlcN6P) to form fructose 6-phosphate (Fru6P) and ammonium ion. In Staphylococcus epidermidis (strain ATCC 35984 / DSM 28319 / BCRC 17069 / CCUG 31568 / BM 3577 / RP62A), this protein is Glucosamine-6-phosphate deaminase.